The primary structure comprises 418 residues: D-inositol 3-phosphate glycosyltransferase 1 (418 aa).

UDP-N-acetyl-alpha-D-glucosamine contacts are provided by residues 24-25 and glycine 32; that span reads QP. 1D-myo-inositol 3-phosphate is bound by residues 29–34, lysine 87, histidine 115, serine 139, and glutamine 159; that span reads DAGGLN. UDP-N-acetyl-alpha-D-glucosamine is bound by residues arginine 233 and lysine 238. Mg(2+) is bound by residues tyrosine 308, arginine 309, and alanine 311. Positions 321 and 329 each coordinate UDP-N-acetyl-alpha-D-glucosamine. Residue threonine 335 coordinates Mg(2+).

The protein belongs to the glycosyltransferase group 1 family. MshA subfamily. In terms of assembly, homodimer.

The catalysed reaction is 1D-myo-inositol 3-phosphate + UDP-N-acetyl-alpha-D-glucosamine = 1D-myo-inositol 2-acetamido-2-deoxy-alpha-D-glucopyranoside 3-phosphate + UDP + H(+). Functionally, catalyzes the transfer of a N-acetyl-glucosamine moiety to 1D-myo-inositol 3-phosphate to produce 1D-myo-inositol 2-acetamido-2-deoxy-glucopyranoside 3-phosphate in the mycothiol biosynthesis pathway. This is D-inositol 3-phosphate glycosyltransferase 1 from Catenulispora acidiphila (strain DSM 44928 / JCM 14897 / NBRC 102108 / NRRL B-24433 / ID139908).